A 178-amino-acid chain; its full sequence is Fatty-acid and retinol-binding protein 1 (178 aa).

The N-terminal stretch at 1-16 (MYHRLILLALVGTTMA) is a signal peptide. 2 coiled-coil regions span residues 67-89 (DAAL…ELRN) and 130-153 (KQAA…ELKV).

The protein belongs to the fatty-acid and retinol-binding protein (FARBP) family. In terms of processing, not glycosylated.

It localises to the secreted. Functionally, binds retinol. Also binds the fluorescent fatty acid 11-((5-dimethylaminonaphthalene-1-sulfonyl)amino)undecanoic acid (DAUDA). The long chain fatty acid oleic acid can act competitively to displace bound DAUDA and retinol. The protein is Fatty-acid and retinol-binding protein 1 of Brugia malayi (Filarial nematode worm).